Consider the following 406-residue polypeptide: 5-cytosine rRNA methyltransferase NSUN4 (406 aa).

S-adenosyl-L-methionine contacts are provided by Gly207, Gly208, Lys209, Asp226, Arg231, Asp259, Gly260, and Asp277. Catalysis depends on Cys332, which acts as the Nucleophile.

It belongs to the class I-like SAM-binding methyltransferase superfamily. RsmB/NOP family.

The protein resides in the mitochondrion. It catalyses the reaction a cytidine in rRNA + S-adenosyl-L-methionine = a 5-methylcytidine in rRNA + S-adenosyl-L-homocysteine + H(+). The enzyme catalyses a cytidine in mRNA + S-adenosyl-L-methionine = a 5-methylcytidine in mRNA + S-adenosyl-L-homocysteine + H(+). Its function is as follows. Mitochondrial RNA cytosine C(5)-methyltransferase that methylates cytosine to 5-methylcytosine (m5C) in various RNAs, such as rRNAs, mRNAs and some long non-coding RNAs (lncRNAs). Involved in mitochondrial ribosome small subunit (SSU) maturation by catalyzing methylation of mitochondrial 12S rRNA. The chain is 5-cytosine rRNA methyltransferase NSUN4 (nsun4) from Xenopus laevis (African clawed frog).